We begin with the raw amino-acid sequence, 622 residues long: Chaperone protein HscA homolog (622 aa).

This sequence belongs to the heat shock protein 70 family.

Functionally, chaperone involved in the maturation of iron-sulfur cluster-containing proteins. Has a low intrinsic ATPase activity which is markedly stimulated by HscB. The polypeptide is Chaperone protein HscA homolog (Burkholderia multivorans (strain ATCC 17616 / 249)).